The chain runs to 65 residues: UPF0291 protein BBR47_33060 (65 aa).

Belongs to the UPF0291 family.

It is found in the cytoplasm. The protein is UPF0291 protein BBR47_33060 of Brevibacillus brevis (strain 47 / JCM 6285 / NBRC 100599).